The primary structure comprises 445 residues: Putative serpin-Z5 (445 aa).

The interval glycine 356–proline 380 is RCL.

This sequence belongs to the serpin family.

Probable serine protease inhibitor. This Oryza sativa subsp. japonica (Rice) protein is Putative serpin-Z5.